The following is a 999-amino-acid chain: MTPGRRSSTFTRLLRHGFTDPSAAERLLDGAGLAELRADPVLLEALGATADPDLALHGLVRLLEAQPDATARQELLDTLIAAKPLRDRLLGVLGASEALADHLARHAGDWQTLVTYEPRDLHRGVEEFERGLAEATDPVTLRVAYRRCLLSIAARDVCGTIDVAETAAELADLAIATLRAALALAEAAAPEDAARCRLAVIAMGKCGGHELNYVSDVDVIFVGEAADTGPDADEAKAMRAATSLAAHMMRICSETTVEGSIWPVDANLRPEGRNGPLVRTLSSHVAYYQRWAKTWEFQALLKARPVAGDPGLGAEYVAALQPLVWQAADRENFVPDVQKMRRRVVENIPLTEVDRQLKLGPGGLRDVEFAVQLLQLVHGRADTSLHSGTTLDALEALAAGGYVGRTDAAQLDEAYRFLRSMEHRIQLHRLRRTHLVPEDEADLRRLGRSLGLRTDPVTGLLRAWKRHASVVRRLHEKLFYRPLLDAVAQLAPGEARLSPEAARERLVALGYADPAAALRHLEALASGVTRKAAIQRTLLPVLLGWFADSADPDTGLLNFRKVSDALGTTPWYLRLLRDEGAAAENLARVLSAGRLAPDLLMRAPEAVALLGDGVAGGLRPRDRAQLEQETLAAVRRADDAVQAVTAVRGVRRRELFRTAAADIVGSYGTETQPVEADQGALVDLVGGAVSDLTSATLAGTLRAVVREKWGDVLPTRFAIIGMGRFGGHELGYGSDADVLFVHEPRDGVAEREAGDAANKVVSEMRRLLQVPSADPPLLIDADLRPEGRSGPLVRTLKSYEAYYRRWSLGWESHALLRAEFVAGDEELGRRFIELIDPLRYPEGGLGEDAVREIRRLKARMESERLPRGADPKLHAKLGPGGLSDVEWTVQLLQLRHGHEIAGLRTTRTRTALAAARDAGLISEEHTATLDEAWVLATRVRNAVMLVRGRAGDTFPTDPRELAAVGRYLGHGSGHAGDMLDEYRRTARRARTVVEDLFYA.

The interval 1 to 483 (MTPGRRSSTF…LHEKLFYRPL (483 aa)) is adenylyl removase. Residues 489–999 (QLAPGEARLS…RTVVEDLFYA (511 aa)) are adenylyl transferase.

The protein belongs to the GlnE family. Mg(2+) serves as cofactor.

It catalyses the reaction [glutamine synthetase]-O(4)-(5'-adenylyl)-L-tyrosine + phosphate = [glutamine synthetase]-L-tyrosine + ADP. The catalysed reaction is [glutamine synthetase]-L-tyrosine + ATP = [glutamine synthetase]-O(4)-(5'-adenylyl)-L-tyrosine + diphosphate. Its function is as follows. Adenylation and deadenylation of glutamate--ammonia ligase. Functionally, involved in the regulation of glutamine synthetase GlnA, a key enzyme in the process to assimilate ammonia. When cellular nitrogen levels are high, the C-terminal adenylyl transferase (AT) inactivates GlnA by covalent transfer of an adenylyl group from ATP to specific tyrosine residue of GlnA, thus reducing its activity. Conversely, when nitrogen levels are low, the N-terminal adenylyl removase (AR) activates GlnA by removing the adenylyl group by phosphorolysis, increasing its activity. The regulatory region of GlnE binds the signal transduction protein PII (GlnB) which indicates the nitrogen status of the cell. This is Bifunctional glutamine synthetase adenylyltransferase/adenylyl-removing enzyme from Streptomyces coelicolor (strain ATCC BAA-471 / A3(2) / M145).